The chain runs to 118 residues: Small ribosomal subunit protein uS13 (118 aa).

The disordered stretch occupies residues 93–118 (KKLPVRGQRTKTNARTRKGPRKLMKK).

This sequence belongs to the universal ribosomal protein uS13 family. As to quaternary structure, part of the 30S ribosomal subunit. Forms a loose heterodimer with protein S19. Forms two bridges to the 50S subunit in the 70S ribosome.

Functionally, located at the top of the head of the 30S subunit, it contacts several helices of the 16S rRNA. In the 70S ribosome it contacts the 23S rRNA (bridge B1a) and protein L5 of the 50S subunit (bridge B1b), connecting the 2 subunits; these bridges are implicated in subunit movement. Contacts the tRNAs in the A and P-sites. The protein is Small ribosomal subunit protein uS13 of Buchnera aphidicola subsp. Baizongia pistaciae (strain Bp).